A 176-amino-acid chain; its full sequence is 2-C-methyl-D-erythritol 2,4-cyclodiphosphate synthase (176 aa).

A divalent metal cation is bound by residues D23, H25, and H60. Residue 23-25 (DSH) coordinates 4-CDP-2-C-methyl-D-erythritol 2-phosphate. Residue 149–152 (TSGE) participates in 4-CDP-2-C-methyl-D-erythritol 2-phosphate binding.

Belongs to the IspF family. Homotrimer. The cofactor is a divalent metal cation.

The catalysed reaction is 4-CDP-2-C-methyl-D-erythritol 2-phosphate = 2-C-methyl-D-erythritol 2,4-cyclic diphosphate + CMP. Its pathway is isoprenoid biosynthesis; isopentenyl diphosphate biosynthesis via DXP pathway; isopentenyl diphosphate from 1-deoxy-D-xylulose 5-phosphate: step 4/6. Its function is as follows. Involved in the biosynthesis of isopentenyl diphosphate (IPP) and dimethylallyl diphosphate (DMAPP), two major building blocks of isoprenoid compounds. Catalyzes the conversion of 4-diphosphocytidyl-2-C-methyl-D-erythritol 2-phosphate (CDP-ME2P) to 2-C-methyl-D-erythritol 2,4-cyclodiphosphate (ME-CPP) with a corresponding release of cytidine 5-monophosphate (CMP). The sequence is that of 2-C-methyl-D-erythritol 2,4-cyclodiphosphate synthase from Chlamydia caviae (strain ATCC VR-813 / DSM 19441 / 03DC25 / GPIC) (Chlamydophila caviae).